A 134-amino-acid chain; its full sequence is MTIRPAYRPKIIKKRTKHFIRHQSDRYAKLSHKWRKPKGIDNRVRRRFKGQYLMPNIGYGSNKRTRHMLPTGFKKFLVHNVRELEVLLMQNRIYCGEIAHAVSSKKRKEIVERAKQLSIRLTNPNGRLRSQENE.

The protein belongs to the eukaryotic ribosomal protein eL32 family.

The polypeptide is Large ribosomal subunit protein eL32 (RpL32) (Drosophila bifasciata (Fruit fly)).